The sequence spans 232 residues: TIR domain-containing adapter molecule 2 (232 aa).

Over residues 1–39 (MGVGKSKLDKCPLSWHKKDSVDADQDGHESDSKNSEEAC) the composition is skewed to basic and acidic residues. The tract at residues 1 to 70 (MGVGKSKLDK…EAKGAGPEEQ (70 aa)) is disordered. G2 is lipidated: N-myristoyl glycine. The TIR domain occupies 74 to 226 (EFLKFVILHA…SIWKETRSVS (153 aa)). Phosphotyrosine is present on Y164.

As to quaternary structure, homodimer. Interacts with TLR4, TICAM1, IRF3 and IRF7 in response to LPS. Interacts with IL1R1, IL1RAP, IRAK2, IRAK3 and TRAF6. Interacts with protein kinase-inactive mutants of IRAK1 and IRAK4. Isoform 1 interacts with isoform 2; the interaction occurs in late endosomes and disrupts the interaction between isoform 1 and TICAM1. Interacts with MYD88; the interaction decreases after IL-18 stimulation in a time-dependent manner. Interacts with IL18R1 and IL18RAP. Interacts with TLR2. Interacts with RAB11FIP2. Myristoylated. Required for membrane association which is critical for its ability to initiate efficient signaling. In terms of processing, phosphorylated by PRKCE in response to LPS. Phosphorylation is essential for its function. It is depleted from the membrane upon phosphorylation. Tyrosine phosphorylation is inhibited by phosphatase PTPN4.

It localises to the cytoplasm. The protein resides in the golgi apparatus. The protein localises to the cell membrane. Its subcellular location is the early endosome. It is found in the late endosome. It localises to the endoplasmic reticulum. The protein resides in the cell projection. The protein localises to the phagocytic cup. Functionally, functions as a sorting adapter in different signaling pathways to facilitate downstream signaling leading to type I interferon induction. In TLR4 signaling, physically bridges TLR4 and TICAM1 and functionally transmits signal to TICAM1 in early endosomes after endocytosis of TLR4. In TLR2 signaling, physically bridges TLR2 and MYD88 and is required for the TLR2-dependent movement of MYD88 to endosomes following ligand engagement. Involved in IL-18 signaling and is proposed to function as a sorting adapter for MYD88 in IL-18 signaling during adaptive immune response. Forms a complex with RAB11FIP2 that is recruited to the phagosomes to promote the activation of the actin-regulatory GTPases RAC1 and CDC42 and subsequent phagocytosis of Gram-negative bacteria. This Mus musculus (Mouse) protein is TIR domain-containing adapter molecule 2 (Ticam2).